The following is a 277-amino-acid chain: Thiamine thiazole synthase (277 aa).

Residues S36, G63, V126, and 152 to 154 each bind NAD(+); that span reads HVD. Positions 154 and 169 each coordinate Fe cation. Residue M230 participates in NAD(+) binding. A glycine-binding site is contributed by R240.

This sequence belongs to the THI4 family. In terms of assembly, homooctamer; tetramer of dimers. Fe(2+) is required as a cofactor.

It catalyses the reaction hydrogen sulfide + glycine + NAD(+) = ADP-5-ethyl-4-methylthiazole-2-carboxylate + nicotinamide + 3 H2O + H(+). It functions in the pathway cofactor biosynthesis; thiamine diphosphate biosynthesis. Its function is as follows. Involved in the biosynthesis of the thiazole moiety of thiamine. Catalyzes the conversion of NAD and glycine to adenosine diphosphate 5-(2-hydroxyethyl)-4-methylthiazole-2-carboxylate (ADT), an adenylated thiazole intermediate, using free sulfide as a source of sulfur. In Fervidobacterium nodosum (strain ATCC 35602 / DSM 5306 / Rt17-B1), this protein is Thiamine thiazole synthase.